We begin with the raw amino-acid sequence, 698 residues long: Capon-like protein (698 aa).

The 170-residue stretch at 25–194 (FFHGITFQAK…SELLDVEQIS (170 aa)) folds into the PID domain. The interval 191-240 (EQISEQQLSEDGERGGGDNETPKKEHLAITPDLNHTQPQRPNHLDIMPSH) is disordered. Residues 201–217 (DGERGGGDNETPKKEHL) are compositionally biased toward basic and acidic residues. Coiled coils occupy residues 265 to 327 (RSEI…LASL), 379 to 484 (NQQL…LNAN), and 554 to 583 (LNED…GNLA). The segment covering 396 to 423 (SQHLQNLQQQQQQQQQQQQQQTQAAPTA) has biased composition (low complexity). A disordered region spans residues 396-460 (SQHLQNLQQQ…QQQQQQQQDA (65 aa)). The segment covering 436–447 (YPSMSALQSISN) has biased composition (polar residues). Low complexity predominate over residues 448-458 (QLQQQQQQQQQ). A disordered region spans residues 588–698 (GGSTSTRDTS…RTTWARHTTK (111 aa)). The span at 590 to 640 (STSTRDTSRSSSTLDSPSSPRLRSSNNNISPGSSNGNQNHNNNSNSNSSSS) shows a compositional bias: low complexity. 2 stretches are compositionally biased toward polar residues: residues 662 to 672 (LSATPSFITRS) and 679 to 698 (NRSQ…HTTK).

Expressed at higher level in wing imaginal disk.

Its function is as follows. Putative adapter protein. The protein is Capon-like protein of Drosophila melanogaster (Fruit fly).